A 262-amino-acid polypeptide reads, in one-letter code: Protein NEGATIVE GRAVITROPIC RESPONSE OF ROOTS (262 aa).

The disordered stretch occupies residues 1-40 (MKFFNWMQNKLGGKQENRKSNTSTSTTYAKPEPREEFSDW). The IGT motif motif lies at 43-49 (SLLAIGT).

This sequence belongs to the LAZY family.

Its function is as follows. Involved in the control of root gravitropism. This Medicago truncatula (Barrel medic) protein is Protein NEGATIVE GRAVITROPIC RESPONSE OF ROOTS.